Reading from the N-terminus, the 338-residue chain is MEMO1 family protein MHO1 (338 aa).

The protein belongs to the MEMO1 family.

The protein localises to the cytoplasm. It localises to the nucleus. Plays a role in haploid invasive growth under conditions of nutrient insufficiency, suggesting that the function of the MEMO1 family in cell motility/invasion is conserved across species. The protein is MEMO1 family protein MHO1 of Saccharomyces cerevisiae (strain ATCC 204508 / S288c) (Baker's yeast).